Here is a 298-residue protein sequence, read N- to C-terminus: N-acetylmuramic acid 6-phosphate etherase (298 aa).

Residues 55–218 (IHAQVSGGGR…STGLMIKSGK (164 aa)) form the SIS domain. The active-site Proton donor is Glu-83. Glu-114 is a catalytic residue.

The protein belongs to the GCKR-like family. MurNAc-6-P etherase subfamily. In terms of assembly, homodimer.

The catalysed reaction is N-acetyl-D-muramate 6-phosphate + H2O = N-acetyl-D-glucosamine 6-phosphate + (R)-lactate. The protein operates within amino-sugar metabolism; 1,6-anhydro-N-acetylmuramate degradation. It functions in the pathway amino-sugar metabolism; N-acetylmuramate degradation. It participates in cell wall biogenesis; peptidoglycan recycling. Its function is as follows. Specifically catalyzes the cleavage of the D-lactyl ether substituent of MurNAc 6-phosphate, producing GlcNAc 6-phosphate and D-lactate. Together with AnmK, is also required for the utilization of anhydro-N-acetylmuramic acid (anhMurNAc) either imported from the medium or derived from its own cell wall murein, and thus plays a role in cell wall recycling. The chain is N-acetylmuramic acid 6-phosphate etherase from Escherichia coli O81 (strain ED1a).